Here is a 217-residue protein sequence, read N- to C-terminus: Probable chemoreceptor glutamine deamidase CheD (217 aa).

The segment at 194 to 217 (ATSGTAPSRGGELFTRASASRTPS) is disordered.

It belongs to the CheD family.

It carries out the reaction L-glutaminyl-[protein] + H2O = L-glutamyl-[protein] + NH4(+). Probably deamidates glutamine residues to glutamate on methyl-accepting chemotaxis receptors (MCPs), playing an important role in chemotaxis. The protein is Probable chemoreceptor glutamine deamidase CheD of Cupriavidus pinatubonensis (strain JMP 134 / LMG 1197) (Cupriavidus necator (strain JMP 134)).